The primary structure comprises 431 residues: uncharacterized protein (431 aa).

Residues 1-258 (MPSQMREAIT…HGLIDLERAG (258 aa)) form the Peptidase S8 domain.

The protein belongs to the peptidase S8 family.

This is an uncharacterized protein from Sinorhizobium fredii (strain NBRC 101917 / NGR234).